Reading from the N-terminus, the 313-residue chain is MAQPIVVAALYKFVTLEDYVNLREPLLQAMLDNGIKGTLLIAEEGINGTVSGSREGIDGLLAWLKNDPRMVDIDHKESYCDEQPFYRTKVKLKKEIVTLGVPGVDPNKKVGTYVEPQDWNALISDPEVLLIDTRNDYEVSIGTFEGAIDPKTTSFREFPDYIKAHFDPSKHKKVAMFCTGGIRCEKASSYMLSEGFDEVFHLKGGILKYLEEVPQQESKWQGDCFVFDNRVTVRHDLSEGDYDQCHACRTPVSVEDRASEHYVPGISCPHCWDKLSEKTRRSAIDRQKQIELAKARNMPHPIGYNYKQSSSEA.

The Rhodanese domain maps to 124–218 (SDPEVLLIDT…YLEEVPQQES (95 aa)). Residue Cys-178 is the Cysteine persulfide intermediate of the active site.

This sequence belongs to the TrhO family.

It carries out the reaction uridine(34) in tRNA + AH2 + O2 = 5-hydroxyuridine(34) in tRNA + A + H2O. Its function is as follows. Catalyzes oxygen-dependent 5-hydroxyuridine (ho5U) modification at position 34 in tRNAs. The protein is tRNA uridine(34) hydroxylase of Pseudomonas fluorescens (strain ATCC BAA-477 / NRRL B-23932 / Pf-5).